A 406-amino-acid polypeptide reads, in one-letter code: Peptidase T (406 aa).

Residue His-78 participates in Zn(2+) binding. Asp-80 is an active-site residue. Position 139 (Asp-139) interacts with Zn(2+). Glu-173 (proton acceptor) is an active-site residue. Positions 174, 196, and 378 each coordinate Zn(2+).

It belongs to the peptidase M20B family. The cofactor is Zn(2+).

It localises to the cytoplasm. The enzyme catalyses Release of the N-terminal residue from a tripeptide.. Functionally, cleaves the N-terminal amino acid of tripeptides. In Clostridium perfringens (strain ATCC 13124 / DSM 756 / JCM 1290 / NCIMB 6125 / NCTC 8237 / Type A), this protein is Peptidase T.